The chain runs to 520 residues: Probable cytosol aminopeptidase (520 aa).

Mn(2+)-binding residues include lysine 232 and aspartate 237. The active site involves lysine 244. 3 residues coordinate Mn(2+): aspartate 255, aspartate 314, and glutamate 316. The active site involves arginine 318. A disordered region spans residues 488-520; it reads KAKKSTAKKATTKKTTTRKTASKTKSTKSKARK.

This sequence belongs to the peptidase M17 family. Mn(2+) is required as a cofactor.

The protein resides in the cytoplasm. The enzyme catalyses Release of an N-terminal amino acid, Xaa-|-Yaa-, in which Xaa is preferably Leu, but may be other amino acids including Pro although not Arg or Lys, and Yaa may be Pro. Amino acid amides and methyl esters are also readily hydrolyzed, but rates on arylamides are exceedingly low.. The catalysed reaction is Release of an N-terminal amino acid, preferentially leucine, but not glutamic or aspartic acids.. Functionally, presumably involved in the processing and regular turnover of intracellular proteins. Catalyzes the removal of unsubstituted N-terminal amino acids from various peptides. The sequence is that of Probable cytosol aminopeptidase (pepA) from Metamycoplasma salivarium (Mycoplasma salivarium).